We begin with the raw amino-acid sequence, 400 residues long: Glycine betaine/proline betaine transport system ATP-binding protein ProV (400 aa).

The ABC transporter domain occupies 29–265 (LSKEQILEKT…PANDYVRTFF (237 aa)). 61–68 (GLSGSGKS) provides a ligand contact to ATP. CBS domains lie at 282-341 (RTPN…GLDA) and 343-400 (LIDA…VNNG).

This sequence belongs to the ABC transporter superfamily. As to quaternary structure, the complex is composed of two ATP-binding proteins (ProV), two transmembrane proteins (ProW) and a solute-binding protein (ProX).

It localises to the cell inner membrane. Its function is as follows. Part of the ProU ABC transporter complex involved in glycine betaine and proline betaine uptake. Probably responsible for energy coupling to the transport system. The sequence is that of Glycine betaine/proline betaine transport system ATP-binding protein ProV from Escherichia coli (strain K12).